We begin with the raw amino-acid sequence, 179 residues long: Large ribosomal subunit protein uL5 (179 aa).

It belongs to the universal ribosomal protein uL5 family. As to quaternary structure, part of the 50S ribosomal subunit; part of the 5S rRNA/L5/L18/L25 subcomplex. Contacts the 5S rRNA and the P site tRNA. Forms a bridge to the 30S subunit in the 70S ribosome.

In terms of biological role, this is one of the proteins that bind and probably mediate the attachment of the 5S RNA into the large ribosomal subunit, where it forms part of the central protuberance. In the 70S ribosome it contacts protein S13 of the 30S subunit (bridge B1b), connecting the 2 subunits; this bridge is implicated in subunit movement. Contacts the P site tRNA; the 5S rRNA and some of its associated proteins might help stabilize positioning of ribosome-bound tRNAs. The chain is Large ribosomal subunit protein uL5 from Xylella fastidiosa (strain M23).